The following is a 154-amino-acid chain: MAYAVVRVRGSVGVRGNIADTMKMLRLHRVNHCVVIPDNEHYTGMIKKVKDYVTYGEIDKDTLVALILKRGRLPGNKRLTEELVKELTELPVEELAEKIIAGEIKIKDTPIKPVFRLHPPRKGYDRAGVKKGFSIGGALGYRSGKINDLLNKMM.

The protein belongs to the universal ribosomal protein uL30 family. In terms of assembly, part of the 50S ribosomal subunit.

The polypeptide is Large ribosomal subunit protein uL30 (Methanococcus maripaludis (strain C5 / ATCC BAA-1333)).